The following is a 167-amino-acid chain: uncharacterized protein (167 aa).

This is an uncharacterized protein from Acidianus convivator (ATV).